The following is a 505-amino-acid chain: 2-isopropylmalate synthase (505 aa).

Residues 5–267 (VYIFDTTLRD…YTNIKTEEIY (263 aa)) enclose the Pyruvate carboxyltransferase domain. Mn(2+) contacts are provided by Asp14, His202, His204, and Asn238. The tract at residues 391–505 (TLEYLHISSG…VNKLIWDSQK (115 aa)) is regulatory domain.

The protein belongs to the alpha-IPM synthase/homocitrate synthase family. LeuA type 1 subfamily. Homodimer. Mn(2+) serves as cofactor.

The protein localises to the cytoplasm. It catalyses the reaction 3-methyl-2-oxobutanoate + acetyl-CoA + H2O = (2S)-2-isopropylmalate + CoA + H(+). The protein operates within amino-acid biosynthesis; L-leucine biosynthesis; L-leucine from 3-methyl-2-oxobutanoate: step 1/4. Catalyzes the condensation of the acetyl group of acetyl-CoA with 3-methyl-2-oxobutanoate (2-ketoisovalerate) to form 3-carboxy-3-hydroxy-4-methylpentanoate (2-isopropylmalate). This is 2-isopropylmalate synthase from Pelotomaculum thermopropionicum (strain DSM 13744 / JCM 10971 / SI).